We begin with the raw amino-acid sequence, 280 residues long: Golgi phosphoprotein 3-like A (280 aa).

The segment at 1–32 (MTTLIRRGRRAEEGQERRADSEDSIKDKDEEE) is disordered. Residues 10 to 32 (RAEEGQERRADSEDSIKDKDEEE) show a composition bias toward basic and acidic residues. Residues W62, R71, R152, and R155 each contribute to the a 1,2-diacyl-sn-glycero-3-phospho-(1D-myo-inositol 4-phosphate) site. The tract at residues 171–182 (EKQNFLLFDMTT) is beta-hairpin required for oligomerization.

It belongs to the GOLPH3/VPS74 family. In terms of assembly, homooligomer.

Its subcellular location is the golgi apparatus. It is found in the golgi stack membrane. The protein localises to the trans-Golgi network membrane. In terms of biological role, phosphatidylinositol-4-phosphate-binding protein that may play a role in the process of vesicle budding at the Golgi and anterograde transport to the plasma membrane. This is Golgi phosphoprotein 3-like A (golph3l-a) from Xenopus laevis (African clawed frog).